Reading from the N-terminus, the 1722-residue chain is Lymphocyte antigen 75 (1722 aa).

The N-terminal stretch at 1–27 is a signal peptide; the sequence is MRTGWATPRRPAGLLMLLFWFFDLAEP. The Extracellular portion of the chain corresponds to 28-1666; sequence SGRAANDPFT…VVCKVPLGPD (1639 aa). One can recognise a Ricin B-type lectin domain in the interval 33–156; sequence NDPFTIVHGN…ESLCDQPYHE (124 aa). N-linked (GlcNAc...) asparagine glycosylation is present at asparagine 135. Positions 164 to 211 constitute a Fibronectin type-II domain; sequence SYGRPCEFPFLIDGTWHHDCILDEDHSGPWCATTLNYEYDRKWGICLK. 4 cysteine pairs are disulfide-bonded: cysteine 169-cysteine 194, cysteine 183-cysteine 209, cysteine 247-cysteine 340, and cysteine 317-cysteine 332. Residues 225-341 enclose the C-type lectin 1 domain; that stretch reads QFGSCYQFNT…CEAQLPYVCR (117 aa). 2 N-linked (GlcNAc...) asparagine glycosylation sites follow: asparagine 345 and asparagine 377. 4 consecutive C-type lectin domains span residues 368-486, 493-625, 652-778, and 818-931; these read NNGF…YVCK, NDAS…ICKK, ASLS…IYLR, and IEGS…FICE. Cystine bridges form between cysteine 389–cysteine 485 and cysteine 462–cysteine 477. N-linked (GlcNAc...) asparagine glycosylation is present at asparagine 529. Cysteine 597 and cysteine 614 are oxidised to a cystine. Cystine bridges form between cysteine 840–cysteine 930 and cysteine 904–cysteine 922. Residues asparagine 843 and asparagine 865 are each glycosylated (N-linked (GlcNAc...) asparagine). A Phosphotyrosine modification is found at tyrosine 933. Asparagine 934, asparagine 1076, and asparagine 1103 each carry an N-linked (GlcNAc...) asparagine glycan. One can recognise a C-type lectin 6 domain in the interval 958-1091; it reads FQNKCFLKIK…ERHFVSLCQK (134 aa). Cysteines 1060 and 1080 form a disulfide. In terms of domain architecture, C-type lectin 7 spans 1110–1222; that stretch reads YLNNLYKIIP…DNQPGAICYY (113 aa). Cysteine 1197 and cysteine 1211 are joined by a disulfide. N-linked (GlcNAc...) asparagine glycosylation is found at asparagine 1225, asparagine 1320, and asparagine 1392. The 124-residue stretch at 1251 to 1374 folds into the C-type lectin 8 domain; it reads FQNCCYNFII…VIEEAVYFHQ (124 aa). C-type lectin domains are found at residues 1401 to 1513 and 1542 to 1661; these read YEDG…ICYK and YKGH…VCKV. An intrachain disulfide couples cysteine 1488 to cysteine 1502. Residues asparagine 1593 and asparagine 1626 are each glycosylated (N-linked (GlcNAc...) asparagine). A disulfide bond links cysteine 1635 and cysteine 1650. The helical transmembrane segment at 1667 to 1691 threads the bilayer; sequence YTAIAIIVATLSILVLMGGLIWFLF. Residues 1692–1722 lie on the Cytoplasmic side of the membrane; it reads QRHRLHLAGFSSVRYAQGVNEDEIMLPSFHD. Residues serine 1703 and serine 1719 each carry the phosphoserine modification.

In terms of processing, N-glycosylated. In terms of tissue distribution, expressed in spleen, thymus, colon and peripheral blood lymphocytes. Detected in myeloid and B-lymphoid cell lines. Isoform 2 and isoform 3 are expressed in malignant Hodgkin lymphoma cells called Hodgkin and Reed-Sternberg (HRS) cells.

It is found in the membrane. In terms of biological role, acts as an endocytic receptor to direct captured antigens from the extracellular space to a specialized antigen-processing compartment. Causes reduced proliferation of B-lymphocytes. This Homo sapiens (Human) protein is Lymphocyte antigen 75 (LY75).